Reading from the N-terminus, the 116-residue chain is Non-specific lipid-transfer protein D, cotyledon-specific isoform (116 aa).

A signal peptide spans 1–24 (MKNIFFSVFFLLSFLLCLANVSEA). Cystine bridges form between Cys28–Cys76, Cys38–Cys53, Cys54–Cys98, and Cys74–Cys112.

It belongs to the plant LTP family.

Functionally, plant non-specific lipid-transfer proteins transfer phospholipids as well as galactolipids across membranes. May play a role in wax or cutin deposition in the cell walls of expanding epidermal cells and certain secretory tissues. In Ricinus communis (Castor bean), this protein is Non-specific lipid-transfer protein D, cotyledon-specific isoform.